Here is a 309-residue protein sequence, read N- to C-terminus: Homoserine O-succinyltransferase (309 aa).

The Acyl-thioester intermediate role is filled by Cys142. Positions 163 and 192 each coordinate substrate. The active-site Proton acceptor is His235. Glu237 is a catalytic residue. Substrate is bound at residue Arg249.

The protein belongs to the MetA family.

The protein resides in the cytoplasm. The enzyme catalyses L-homoserine + succinyl-CoA = O-succinyl-L-homoserine + CoA. Its pathway is amino-acid biosynthesis; L-methionine biosynthesis via de novo pathway; O-succinyl-L-homoserine from L-homoserine: step 1/1. In terms of biological role, transfers a succinyl group from succinyl-CoA to L-homoserine, forming succinyl-L-homoserine. The sequence is that of Homoserine O-succinyltransferase from Klebsiella pneumoniae (strain 342).